A 141-amino-acid polypeptide reads, in one-letter code: Large ribosomal subunit protein uL11 (141 aa).

It belongs to the universal ribosomal protein uL11 family. In terms of assembly, part of the ribosomal stalk of the 50S ribosomal subunit. Interacts with L10 and the large rRNA to form the base of the stalk. L10 forms an elongated spine to which L12 dimers bind in a sequential fashion forming a multimeric L10(L12)X complex. Post-translationally, one or more lysine residues are methylated.

In terms of biological role, forms part of the ribosomal stalk which helps the ribosome interact with GTP-bound translation factors. This Streptococcus pneumoniae serotype 2 (strain D39 / NCTC 7466) protein is Large ribosomal subunit protein uL11.